The following is a 182-amino-acid chain: Ribulose bisphosphate carboxylase small subunit, chloroplastic 1 (182 aa).

A chloroplast-targeting transit peptide spans 1–42; the sequence is MASIMMNKSVVLSKECAKPLATPKVTLNKRGFATTIATKNRE.

It belongs to the RuBisCO small chain family. Heterohexadecamer of 8 large and 8 small subunits.

Its subcellular location is the plastid. The protein localises to the chloroplast. In terms of biological role, ruBisCO catalyzes two reactions: the carboxylation of D-ribulose 1,5-bisphosphate, the primary event in carbon dioxide fixation, as well as the oxidative fragmentation of the pentose substrate. Both reactions occur simultaneously and in competition at the same active site. Although the small subunit is not catalytic it is essential for maximal activity. This chain is Ribulose bisphosphate carboxylase small subunit, chloroplastic 1, found in Acetabularia acetabulum (Mermaid's wine glass).